A 239-amino-acid chain; its full sequence is Fatty acid metabolism regulator protein (239 aa).

The HTH gntR-type domain occupies Gln6 to Phe74. The segment at residues Glu34 to Gln53 is a DNA-binding region (H-T-H motif).

As to quaternary structure, homodimer.

It is found in the cytoplasm. In terms of biological role, multifunctional regulator of fatty acid metabolism. The protein is Fatty acid metabolism regulator protein of Yersinia pseudotuberculosis serotype O:1b (strain IP 31758).